An 857-amino-acid chain; its full sequence is Protein argonaute-1 (857 aa).

Residues 227–346 (PVIEFMCEVL…LPLEVCNIVA (120 aa)) enclose the PAZ domain. 2 interaction with guide RNA regions span residues 309 to 314 (YFKQKY) and 522 to 564 (GKTP…LCLK). The 302-residue stretch at 515–816 (LIIVILPGKT…VAFRARYHLV (302 aa)) folds into the Piwi domain. The impairs access of bound RNA to the active site stretch occupies residues 670-675 (PEGQLP). Interaction with guide RNA regions lie at residues 708–712 (RHHTR), 751–759 (HAGIQGTSR), and 788–813 (YVRCTRSVSIPAPAYYARLVAFRARY).

It belongs to the argonaute family. Ago subfamily. In terms of assembly, interacts with DDB1, DDX5, DDX6, DHX30, DHX36, DDX47, DICER1, AGO2, ELAVL1, HNRNPF, IGF2BP1, ILF3, IMP8, MATR3, MOV10, PABPC1, PRMT5, RBM4, SART3, TNRC6B, UPF1 and YBX1. Associates with polysomes and messenger ribonucleoproteins (mNRPs). Interacts with LIMD1, WTIP and AJUBA. Interacts with APOBEC3F, APOBEC3G and APOBEC3H. Ubiquitinated on surface-exposed lysines by a SCF-like E3 ubiquitin-protein ligase complex containing ZSWIM8 during target-directed microRNA degradation (TDMD), a process that mediates degradation of microRNAs (miRNAs). Ubiquitination by the SCF-like E3 ubiquitin-protein ligase complex containing ZSWIM8 leads to its subsequent degradation, thereby exposing miRNAs for degradation. ZSWIM8 recognizes and binds AGO1 when it is engaged with a TDMD target.

It localises to the cytoplasm. The protein localises to the P-body. Functionally, required for RNA-mediated gene silencing (RNAi). Binds to short RNAs such as microRNAs (miRNAs) or short interfering RNAs (siRNAs), and represses the translation of mRNAs which are complementary to them. Lacks endonuclease activity and does not appear to cleave target mRNAs. Also required for transcriptional gene silencing (TGS) of promoter regions which are complementary to bound short antigene RNAs (agRNAs). The protein is Protein argonaute-1 (AGO1) of Homo sapiens (Human).